The following is a 334-amino-acid chain: WD repeat domain 54 (334 aa).

WD repeat units follow at residues 162–206, 208–247, and 250–289; these read GHQT…TLLT, IAGFGVPCPSVQLWQGIVAAGYGNGQVRLYDAGTGALHIQ, and AHARTISALDLAPEVGKLLSAAEDTFVHIWKLNRNPESGS.

Homodimer and homotrimer; forms tight forms of dimers and trimers. Interacts with IZUMO1 and IZUMO1R/JUNO. In terms of processing, cross-linked to tightly form both dimers and trimers by TGM2. Cross-linking enhances the activation of EGF receptor-mediated signaling pathway. Cross-linking is inhibited by EGF. Post-translationally, ubiquitinated. EGF increases ubiquitination. Widely expressed in the ovary and testis (at protein level).

It localises to the vesicle. The protein resides in the cytoplasm. Its subcellular location is the cell membrane. In terms of biological role, plays a role in the adhesion and fusion of the sperm-oocyte membrane through its interactions with IZUMO1 and IZUMO1R/JUNO. When cross-linked to form dimers and trimers, it has a regulatory effect on ERK signaling pathway activity in response to EGF stimulation. Colocalizes with the EGF receptor in WDR54-specific vesicle where it sustains the internalization and controls the degradation of the EGF receptor after EGF stimulation. In Rattus norvegicus (Rat), this protein is WD repeat domain 54 (Wdr54).